The following is a 260-amino-acid chain: Small ribosomal subunit protein eS1 (260 aa).

The residue at position 2 (A2) is an N-acetylalanine; partial.

This sequence belongs to the eukaryotic ribosomal protein eS1 family. As to quaternary structure, component of the small ribosomal subunit. Mature ribosomes consist of a small (40S) and a large (60S) subunit. The 40S subunit contains about 33 different proteins and 1 molecule of RNA (18S). The 60S subunit contains about 49 different proteins and 3 molecules of RNA (25S, 5.8S and 5S).

Its subcellular location is the cytoplasm. The sequence is that of Small ribosomal subunit protein eS1 from Mycosarcoma maydis (Corn smut fungus).